The sequence spans 311 residues: Ribosomal RNA small subunit methyltransferase H (311 aa).

S-adenosyl-L-methionine is bound by residues 39 to 41, aspartate 59, phenylalanine 87, aspartate 102, and histidine 109; that span reads GGH.

The protein belongs to the methyltransferase superfamily. RsmH family.

It is found in the cytoplasm. The catalysed reaction is cytidine(1402) in 16S rRNA + S-adenosyl-L-methionine = N(4)-methylcytidine(1402) in 16S rRNA + S-adenosyl-L-homocysteine + H(+). In terms of biological role, specifically methylates the N4 position of cytidine in position 1402 (C1402) of 16S rRNA. This chain is Ribosomal RNA small subunit methyltransferase H, found in Porphyromonas gingivalis (strain ATCC 33277 / DSM 20709 / CIP 103683 / JCM 12257 / NCTC 11834 / 2561).